The chain runs to 537 residues: Tegument protein BRRF2 (537 aa).

Disordered stretches follow at residues 322 to 466 (PRFL…AEEF) and 486 to 537 (GLRV…LSVV). A compositionally biased stretch (polar residues) spans 334 to 347 (EPQQTCSQLTSRGN). Positions 420–441 (VTGSSQAAPSSSSVTPVASLSG) are enriched in low complexity. The span at 492-517 (DEDEDGSEDGEFSDLDLSDSDHEGDE) shows a compositional bias: acidic residues.

The protein belongs to the lymphocryptovirus BRRF2 family.

The protein localises to the virion tegument. This Homo sapiens (Human) protein is Tegument protein BRRF2.